We begin with the raw amino-acid sequence, 307 residues long: GTPase Era (307 aa).

An Era-type G domain is found at 14 to 184 (HSGFVAIVGK…REQILDILPE (171 aa)). The segment at 22 to 29 (GKPNVGKS) is G1. 22-29 (GKPNVGKS) is a GTP binding site. The G2 stretch occupies residues 48–52 (QTTRR). The interval 69–72 (DTPG) is G3. Residues 69 to 73 (DTPGL) and 131 to 134 (NKTD) each bind GTP. Residues 131–134 (NKTD) are G4. The tract at residues 162–164 (LSA) is G5. The region spanning 215 to 292 (LREELPYAVA…FLGLEVIVIP (78 aa)) is the KH type-2 domain.

Belongs to the TRAFAC class TrmE-Era-EngA-EngB-Septin-like GTPase superfamily. Era GTPase family. As to quaternary structure, monomer.

It localises to the cytoplasm. The protein resides in the cell membrane. Functionally, an essential GTPase that binds both GDP and GTP, with rapid nucleotide exchange. Plays a role in 16S rRNA processing and 30S ribosomal subunit biogenesis and possibly also in cell cycle regulation and energy metabolism. The sequence is that of GTPase Era from Deinococcus deserti (strain DSM 17065 / CIP 109153 / LMG 22923 / VCD115).